A 68-amino-acid chain; its full sequence is Conotoxin Lp5.2 (68 aa).

Residues 1 to 19 (MRCVPVFIILLLLASPAAP) form the signal peptide. Residues 20-54 (KSLETRIQNDLIRAGLTDADLKTEKGFLSGLLNVA) constitute a propeptide that is removed on maturation.

It belongs to the conotoxin T superfamily. Post-translationally, contains 2 disulfide bonds that can be either 'C1-C3, C2-C4' or 'C1-C4, C2-C3', since these disulfide connectivities have been observed for conotoxins with cysteine framework V (for examples, see AC P0DQQ7 and AC P81755). Expressed by the venom duct.

Its subcellular location is the secreted. The chain is Conotoxin Lp5.2 from Conus leopardus (Leopard cone).